We begin with the raw amino-acid sequence, 1283 residues long: 5-oxoprolinase PfmaA (1283 aa).

Positions 1256 to 1283 (NTPGGGAWGKPEGDADGYREEDQAGDGI) are disordered. Residues 1266-1277 (PEGDADGYREED) show a composition bias toward basic and acidic residues.

This sequence belongs to the oxoprolinase family. Homodimer.

It catalyses the reaction 5-oxo-L-proline + ATP + 2 H2O = L-glutamate + ADP + phosphate + H(+). Functionally, 5-oxoprolinase; part of the gene cluster that mediates the biosynthesis of dihydroxynaphthalene (DHN)-melanin, a bluish-green pigment forming a dark layer in the conidial wall that protects the conidia from UV radiations. The first step of the pathway is the production of the pentaketide 1,3,6,8-tetrahydroxynaphthalene (1,3,6,8-THN or T4HN) by the polyketide synthase PfmaE though condensation of acetyl-CoA with malonyl-CoA. T4HN is not stable and easily oxidizes into the stable form flaviolin. T4HN is also substrate of the hydroxynaphthalene reductase PfmaG to yield scytalone. The scytalone dehydratase PfmaJ then reduces scytalone to 1,3,8-THN. 1,3,8-THN is then substrate of the hydroxynaphthalene reductase PfmaI to yield vermelone. Vermelone is further converted by the multicopper oxidase PfmaD to 1,8-DHN. Finally the laccase PFICI_06862 transforms 1,8-DHN to DHN-melanin. The roles of the 5-oxoprolinase PfmaA and the proline iminopeptidase PfmaB within the cluster have not been elucidated yet. This Pestalotiopsis fici (strain W106-1 / CGMCC3.15140) protein is 5-oxoprolinase PfmaA.